Here is a 400-residue protein sequence, read N- to C-terminus: CCA-adding enzyme (400 aa).

ATP-binding residues include G28 and R31. Residues G28 and R31 each coordinate CTP. Mg(2+) is bound by residues D41 and D43. Residues R112, D155, R158, R161, and R164 each coordinate ATP. CTP-binding residues include R112, D155, R158, R161, and R164.

This sequence belongs to the tRNA nucleotidyltransferase/poly(A) polymerase family. Bacterial CCA-adding enzyme type 3 subfamily. In terms of assembly, homodimer. The cofactor is Mg(2+).

The enzyme catalyses a tRNA precursor + 2 CTP + ATP = a tRNA with a 3' CCA end + 3 diphosphate. It catalyses the reaction a tRNA with a 3' CCA end + 2 CTP + ATP = a tRNA with a 3' CCACCA end + 3 diphosphate. In terms of biological role, catalyzes the addition and repair of the essential 3'-terminal CCA sequence in tRNAs without using a nucleic acid template. Adds these three nucleotides in the order of C, C, and A to the tRNA nucleotide-73, using CTP and ATP as substrates and producing inorganic pyrophosphate. tRNA 3'-terminal CCA addition is required both for tRNA processing and repair. Also involved in tRNA surveillance by mediating tandem CCA addition to generate a CCACCA at the 3' terminus of unstable tRNAs. While stable tRNAs receive only 3'-terminal CCA, unstable tRNAs are marked with CCACCA and rapidly degraded. The chain is CCA-adding enzyme from Staphylococcus aureus (strain Mu3 / ATCC 700698).